Consider the following 468-residue polypeptide: Probable protein phosphatase 2C 52 (468 aa).

One can recognise a PPM-type phosphatase domain in the interval 67–372; the sequence is SSCIFTQQGR…DDCAVVCLFL (306 aa). The Mn(2+) site is built by Asp-102, Gly-103, Asp-317, and Asp-363. Polar residues predominate over residues 413-429; sequence RSSSDQENETYGNVNTE. Residues 413-442 are disordered; it reads RSSSDQENETYGNVNTETDAEDEKTVGDQN.

Belongs to the PP2C family. Requires Mg(2+) as cofactor. The cofactor is Mn(2+).

The enzyme catalyses O-phospho-L-seryl-[protein] + H2O = L-seryl-[protein] + phosphate. The catalysed reaction is O-phospho-L-threonyl-[protein] + H2O = L-threonyl-[protein] + phosphate. The polypeptide is Probable protein phosphatase 2C 52 (Arabidopsis thaliana (Mouse-ear cress)).